A 139-amino-acid polypeptide reads, in one-letter code: Aspartate 1-decarboxylase (139 aa).

S25 functions as the Schiff-base intermediate with substrate; via pyruvic acid in the catalytic mechanism. S25 bears the Pyruvic acid (Ser) mark. T57 contacts substrate. The active-site Proton donor is Y58. 73 to 75 contributes to the substrate binding site; the sequence is GAA. Residues 117 to 139 are disordered; that stretch reads TGSDPADAPAGSGLLRGDRPAGR.

This sequence belongs to the PanD family. Heterooctamer of four alpha and four beta subunits. Requires pyruvate as cofactor. Post-translationally, is synthesized initially as an inactive proenzyme, which is activated by self-cleavage at a specific serine bond to produce a beta-subunit with a hydroxyl group at its C-terminus and an alpha-subunit with a pyruvoyl group at its N-terminus.

Its subcellular location is the cytoplasm. The enzyme catalyses L-aspartate + H(+) = beta-alanine + CO2. It functions in the pathway cofactor biosynthesis; (R)-pantothenate biosynthesis; beta-alanine from L-aspartate: step 1/1. In terms of biological role, catalyzes the pyruvoyl-dependent decarboxylation of aspartate to produce beta-alanine. This is Aspartate 1-decarboxylase from Nocardioides sp. (strain ATCC BAA-499 / JS614).